Reading from the N-terminus, the 319-residue chain is NADH-quinone oxidoreductase subunit H 1 (319 aa).

The next 8 membrane-spanning stretches (helical) occupy residues 8-28 (LFNI…LIWI), 74-94 (LVFI…FAVI), 107-127 (IGLL…VLGG), 147-167 (LSYE…AGTF), 179-199 (MWFC…GIAE), 230-250 (FFVG…TLFF), 258-278 (LPPL…FILL), and 297-317 (LMLP…LALD).

Belongs to the complex I subunit 1 family. NDH-1 is composed of 14 different subunits. Subunits NuoA, H, J, K, L, M, N constitute the membrane sector of the complex.

The protein resides in the cell inner membrane. It carries out the reaction a quinone + NADH + 5 H(+)(in) = a quinol + NAD(+) + 4 H(+)(out). Its function is as follows. NDH-1 shuttles electrons from NADH, via FMN and iron-sulfur (Fe-S) centers, to quinones in the respiratory chain. The immediate electron acceptor for the enzyme in this species is believed to be ubiquinone. Couples the redox reaction to proton translocation (for every two electrons transferred, four hydrogen ions are translocated across the cytoplasmic membrane), and thus conserves the redox energy in a proton gradient. This subunit may bind ubiquinone. This chain is NADH-quinone oxidoreductase subunit H 1, found in Nitrosococcus oceani (strain ATCC 19707 / BCRC 17464 / JCM 30415 / NCIMB 11848 / C-107).